Here is a 55-residue protein sequence, read N- to C-terminus: Seripauperin-7 (55 aa).

The N-terminal stretch at 1–20 is a signal peptide; it reads MVKLTSIAAGVAAIAAGASA.

It belongs to the SRP1/TIP1 family. Seripauperin subfamily.

In Saccharomyces cerevisiae (strain ATCC 204508 / S288c) (Baker's yeast), this protein is Seripauperin-7 (PAU7).